The primary structure comprises 257 residues: Ribosomal RNA small subunit methyltransferase J (257 aa).

Residues 107–108, 123–124, and Asp-177 each bind S-adenosyl-L-methionine; these read RD and ER.

It belongs to the methyltransferase superfamily. RsmJ family.

It is found in the cytoplasm. It catalyses the reaction guanosine(1516) in 16S rRNA + S-adenosyl-L-methionine = N(2)-methylguanosine(1516) in 16S rRNA + S-adenosyl-L-homocysteine + H(+). Specifically methylates the guanosine in position 1516 of 16S rRNA. In Haemophilus influenzae (strain ATCC 51907 / DSM 11121 / KW20 / Rd), this protein is Ribosomal RNA small subunit methyltransferase J.